A 212-amino-acid polypeptide reads, in one-letter code: Large ribosomal subunit protein uL3 (212 aa).

Position 152 is an N5-methylglutamine (Gln-152).

The protein belongs to the universal ribosomal protein uL3 family. As to quaternary structure, part of the 50S ribosomal subunit. Forms a cluster with proteins L14 and L19. In terms of processing, methylated by PrmB.

Functionally, one of the primary rRNA binding proteins, it binds directly near the 3'-end of the 23S rRNA, where it nucleates assembly of the 50S subunit. In Chromohalobacter salexigens (strain ATCC BAA-138 / DSM 3043 / CIP 106854 / NCIMB 13768 / 1H11), this protein is Large ribosomal subunit protein uL3.